A 269-amino-acid polypeptide reads, in one-letter code: 4-hydroxy-tetrahydrodipicolinate reductase (269 aa).

NAD(+)-binding positions include 8 to 13 (GAAGRM), E34, 98 to 100 (GTT), and 122 to 125 (APNY). The active-site Proton donor/acceptor is H155. H156 contacts (S)-2,3,4,5-tetrahydrodipicolinate. K159 serves as the catalytic Proton donor. 165-166 (GT) serves as a coordination point for (S)-2,3,4,5-tetrahydrodipicolinate.

It belongs to the DapB family.

It localises to the cytoplasm. The catalysed reaction is (S)-2,3,4,5-tetrahydrodipicolinate + NAD(+) + H2O = (2S,4S)-4-hydroxy-2,3,4,5-tetrahydrodipicolinate + NADH + H(+). The enzyme catalyses (S)-2,3,4,5-tetrahydrodipicolinate + NADP(+) + H2O = (2S,4S)-4-hydroxy-2,3,4,5-tetrahydrodipicolinate + NADPH + H(+). It participates in amino-acid biosynthesis; L-lysine biosynthesis via DAP pathway; (S)-tetrahydrodipicolinate from L-aspartate: step 4/4. In terms of biological role, catalyzes the conversion of 4-hydroxy-tetrahydrodipicolinate (HTPA) to tetrahydrodipicolinate. The polypeptide is 4-hydroxy-tetrahydrodipicolinate reductase (Aliivibrio salmonicida (strain LFI1238) (Vibrio salmonicida (strain LFI1238))).